The chain runs to 395 residues: HORMA domain-containing protein 1 (395 aa).

An HORMA domain is found at 24 to 226; sequence QQSLVLVKRL…TPFHTFKVKV (203 aa). The tract at residues 329-395 is disordered; it reads DVSESKTRSG…RKFSEPKEYV (67 aa). The span at 344–353 shows a compositional bias: polar residues; that stretch reads KMANGNQPVK. Residues 354–363 show a composition bias toward basic and acidic residues; that stretch reads SSKENRKRNQ. Phosphoserine is present on Ser377. The Nuclear localization signal signature appears at 384–387; the sequence is KRRK.

As to quaternary structure, interacts with HORMAD2. Interacts with IHO1. In terms of processing, phosphorylated at Ser-378 in a SPO11-dependent manner.

The protein localises to the nucleus. It is found in the chromosome. Its function is as follows. Plays a key role in meiotic progression. Regulates 3 different functions during meiosis: ensures that sufficient numbers of processed DNA double-strand breaks (DSBs) are available for successful homology search by increasing the steady-state numbers of single-stranded DSB ends. Promotes synaptonemal-complex formation independently of its role in homology search. Plays a key role in the male mid-pachytene checkpoint and the female meiotic prophase checkpoint: required for efficient build-up of ATR activity on unsynapsed chromosome regions, a process believed to form the basis of meiotic silencing of unsynapsed chromatin (MSUC) and meiotic prophase quality control in both sexes. This is HORMA domain-containing protein 1 (HORMAD1) from Canis lupus familiaris (Dog).